The chain runs to 229 residues: UPF0500 protein C1orf216 (229 aa).

Residues 1–144 (MFAIQPGLAE…RGPGPPDPLL (144 aa)) form a disordered region. The segment covering 62 to 71 (SESPSDNQAF) has biased composition (polar residues). Low complexity-rich tracts occupy residues 84-93 (PPEGAEIPGA) and 115-126 (SSSLSIDSRSSS).

Belongs to the UPF0500 family.

The polypeptide is UPF0500 protein C1orf216 (C1orf216) (Homo sapiens (Human)).